Consider the following 172-residue polypeptide: Large ribosomal subunit protein uL10 (172 aa).

The protein belongs to the universal ribosomal protein uL10 family. Part of the ribosomal stalk of the 50S ribosomal subunit. The N-terminus interacts with L11 and the large rRNA to form the base of the stalk. The C-terminus forms an elongated spine to which L12 dimers bind in a sequential fashion forming a multimeric L10(L12)X complex.

Forms part of the ribosomal stalk, playing a central role in the interaction of the ribosome with GTP-bound translation factors. This Leifsonia xyli subsp. xyli (strain CTCB07) protein is Large ribosomal subunit protein uL10.